The primary structure comprises 110 residues: UPF0060 membrane protein Pcryo_1341 (110 aa).

Transmembrane regions (helical) follow at residues 7-27 (VGLF…PYLW), 33-53 (SIWL…LLTL), 63-83 (AAYG…VDGI), and 87-107 (TWDI…MFAP).

This sequence belongs to the UPF0060 family.

The protein localises to the cell inner membrane. The polypeptide is UPF0060 membrane protein Pcryo_1341 (Psychrobacter cryohalolentis (strain ATCC BAA-1226 / DSM 17306 / VKM B-2378 / K5)).